The following is a 295-amino-acid chain: Putative 23S rRNA (guanine-N(1)-)-methyltransferase (295 aa).

Zn(2+) contacts are provided by Cys-11, Cys-14, Cys-31, and His-35. S-adenosyl-L-methionine is bound by residues Tyr-74, Thr-116–Gly-117, and His-204.

Belongs to the methyltransferase superfamily. RlmA family.

Confers strong resistance to mycinamicin (MM) and tylosin (TY). May function as methyltransferase. The sequence is that of Putative 23S rRNA (guanine-N(1)-)-methyltransferase (myrA) from Micromonospora griseorubida.